The chain runs to 842 residues: Protein translocase subunit SecA (842 aa).

ATP contacts are provided by residues Gln-85, 103–107 (GEGKT), and Asp-493. The Zn(2+) site is built by Cys-825, Cys-827, Cys-836, and His-837.

This sequence belongs to the SecA family. Monomer and homodimer. Part of the essential Sec protein translocation apparatus which comprises SecA, SecYEG and auxiliary proteins SecDF. Other proteins may also be involved. Requires Zn(2+) as cofactor.

It localises to the cell membrane. The protein localises to the cytoplasm. It carries out the reaction ATP + H2O + cellular proteinSide 1 = ADP + phosphate + cellular proteinSide 2.. In terms of biological role, part of the Sec protein translocase complex. Interacts with the SecYEG preprotein conducting channel. Has a central role in coupling the hydrolysis of ATP to the transfer of proteins into and across the cell membrane, serving as an ATP-driven molecular motor driving the stepwise translocation of polypeptide chains across the membrane. The chain is Protein translocase subunit SecA from Streptococcus uberis (strain ATCC BAA-854 / 0140J).